A 141-amino-acid chain; its full sequence is Protein archease (141 aa).

Positions 19 and 140 each coordinate Ca(2+).

The protein belongs to the archease family.

Activates the tRNA-splicing ligase complex by facilitating the enzymatic turnover of catalytic subunit RtcB. Acts by promoting the guanylylation of RtcB, a key intermediate step in tRNA ligation. Can also alter the NTP specificity of RtcB such that ATP, dGTP or ITP is used efficiently. The protein is Protein archease of Thermoplasma acidophilum (strain ATCC 25905 / DSM 1728 / JCM 9062 / NBRC 15155 / AMRC-C165).